Consider the following 819-residue polypeptide: Transferrin 2 (819 aa).

Positions 1 to 21 (MASSLVFVALVGALCFTLANA) are cleaved as a signal peptide. The Transferrin-like 1 domain maps to 33 to 373 (MVWCTKSQAE…QYDQYRSERL (341 aa)). Cystine bridges form between Cys-36/Cys-78 and Cys-46/Cys-69. 2 N-linked (GlcNAc...) asparagine glycosylation sites follow: Asn-48 and Asn-66. Positions 93 and 121 each coordinate Fe(3+). Intrachain disulfides connect Cys-147–Cys-237, Cys-190–Cys-213, and Cys-273–Cys-287. The hydrogencarbonate site is built by Ala-155 and Gly-156. The N-linked (GlcNAc...) asparagine glycan is linked to Asn-187. Tyr-231 is a Fe(3+) binding site. Residues 325 to 361 (GTRDDQSRQGGQSFNSRNNINDQNAYGQFDNNDPYRT) are disordered. Residues 332 to 361 (RQGGQSFNSRNNINDQNAYGQFDNNDPYRT) are compositionally biased toward polar residues. Asn-388 is a glycosylation site (N-linked (GlcNAc...) asparagine). Residues 450–796 (MTLCVTSENE…FMRARRITDC (347 aa)) form the Transferrin-like 2 domain. Intrachain disulfides connect Cys-453–Cys-490 and Cys-463–Cys-481. Fe(3+)-binding residues include Asp-505 and Tyr-533. Intrachain disulfides connect Cys-557-Cys-646, Cys-599-Cys-621, Cys-618-Cys-629, and Cys-687-Cys-701. 3 residues coordinate hydrogencarbonate: Thr-559, Ala-565, and Gly-566. Residue Asn-720 is glycosylated (N-linked (GlcNAc...) asparagine). Residue Cys-796 is the site of GPI-anchor amidated cysteine attachment. The propeptide at 797–819 (YAGASQLALSVGLLLVGSLVAML) is removed in mature form.

Belongs to the transferrin family. In terms of assembly, forms a complex composed of septa junction proteins Nrx-IV/Nrx, Tsf2/MTf, Cont and Nrg during late embryogenesis.

It is found in the apicolateral cell membrane. It localises to the cell junction. The protein resides in the septate junction. Iron-binding protein and component of septate junctions that form the paracellular permeability barrier in epithelial tissues. In an iron-dependent manner, required for septate junction assembly during epithelial maturation in embryos and mature septa junctions stability. The sequence is that of Transferrin 2 from Drosophila melanogaster (Fruit fly).